A 54-amino-acid chain; its full sequence is Sec-independent protein translocase protein TatA (54 aa).

The helical transmembrane segment at 1-21 (MGMSFSHLLIVLLIIFVLFGA) threads the bilayer.

Belongs to the TatA/E family. The Tat system comprises two distinct complexes: a TatABC complex, containing multiple copies of TatA, TatB and TatC subunits, and a separate TatA complex, containing only TatA subunits. Substrates initially bind to the TatABC complex, which probably triggers association of the separate TatA complex to form the active translocon.

It is found in the cell inner membrane. Part of the twin-arginine translocation (Tat) system that transports large folded proteins containing a characteristic twin-arginine motif in their signal peptide across membranes. TatA could form the protein-conducting channel of the Tat system. The polypeptide is Sec-independent protein translocase protein TatA (Rickettsia prowazekii (strain Madrid E)).